The following is a 556-amino-acid chain: Formate--tetrahydrofolate ligase (556 aa).

Residue 65–72 (TPAGEGKS) coordinates ATP.

The protein belongs to the formate--tetrahydrofolate ligase family.

The catalysed reaction is (6S)-5,6,7,8-tetrahydrofolate + formate + ATP = (6R)-10-formyltetrahydrofolate + ADP + phosphate. Its pathway is one-carbon metabolism; tetrahydrofolate interconversion. The polypeptide is Formate--tetrahydrofolate ligase (Streptococcus pneumoniae (strain JJA)).